The sequence spans 121 residues: Non-specific lipid-transfer protein 9 (121 aa).

A signal peptide spans 1–27 (MRKSISIAFVIAITIFMSHLNVFTVYS). Cystine bridges form between Cys-31/Cys-80, Cys-41/Cys-57, Cys-58/Cys-102, and Cys-78/Cys-116.

This sequence belongs to the plant LTP family.

Functionally, plant non-specific lipid-transfer proteins transfer phospholipids as well as galactolipids across membranes. May play a role in wax or cutin deposition in the cell walls of expanding epidermal cells and certain secretory tissues. The protein is Non-specific lipid-transfer protein 9 (LTP9) of Arabidopsis thaliana (Mouse-ear cress).